The following is a 59-amino-acid chain: Large ribosomal subunit protein bL32 (59 aa).

This sequence belongs to the bacterial ribosomal protein bL32 family.

This is Large ribosomal subunit protein bL32 from Polynucleobacter necessarius subsp. necessarius (strain STIR1).